We begin with the raw amino-acid sequence, 271 residues long: Imidazole glycerol phosphate synthase subunit HisF (271 aa).

Residues aspartate 12 and aspartate 136 contribute to the active site.

Belongs to the HisA/HisF family. In terms of assembly, heterodimer of HisH and HisF.

The protein resides in the cytoplasm. It carries out the reaction 5-[(5-phospho-1-deoxy-D-ribulos-1-ylimino)methylamino]-1-(5-phospho-beta-D-ribosyl)imidazole-4-carboxamide + L-glutamine = D-erythro-1-(imidazol-4-yl)glycerol 3-phosphate + 5-amino-1-(5-phospho-beta-D-ribosyl)imidazole-4-carboxamide + L-glutamate + H(+). Its pathway is amino-acid biosynthesis; L-histidine biosynthesis; L-histidine from 5-phospho-alpha-D-ribose 1-diphosphate: step 5/9. In terms of biological role, IGPS catalyzes the conversion of PRFAR and glutamine to IGP, AICAR and glutamate. The HisF subunit catalyzes the cyclization activity that produces IGP and AICAR from PRFAR using the ammonia provided by the HisH subunit. The chain is Imidazole glycerol phosphate synthase subunit HisF from Natronomonas pharaonis (strain ATCC 35678 / DSM 2160 / CIP 103997 / JCM 8858 / NBRC 14720 / NCIMB 2260 / Gabara) (Halobacterium pharaonis).